A 309-amino-acid chain; its full sequence is Branched-chain-amino-acid aminotransferase (309 aa).

K160 is subject to N6-(pyridoxal phosphate)lysine.

It belongs to the class-IV pyridoxal-phosphate-dependent aminotransferase family. As to quaternary structure, homohexamer. Pyridoxal 5'-phosphate serves as cofactor.

The enzyme catalyses L-leucine + 2-oxoglutarate = 4-methyl-2-oxopentanoate + L-glutamate. It catalyses the reaction L-isoleucine + 2-oxoglutarate = (S)-3-methyl-2-oxopentanoate + L-glutamate. It carries out the reaction L-valine + 2-oxoglutarate = 3-methyl-2-oxobutanoate + L-glutamate. Its pathway is amino-acid biosynthesis; L-isoleucine biosynthesis; L-isoleucine from 2-oxobutanoate: step 4/4. It functions in the pathway amino-acid biosynthesis; L-leucine biosynthesis; L-leucine from 3-methyl-2-oxobutanoate: step 4/4. It participates in amino-acid biosynthesis; L-valine biosynthesis; L-valine from pyruvate: step 4/4. In terms of biological role, acts on leucine, isoleucine and valine. The sequence is that of Branched-chain-amino-acid aminotransferase (ilvE) from Escherichia coli O157:H7.